We begin with the raw amino-acid sequence, 226 residues long: Protein FMP52-1, mitochondrial (226 aa).

Residues 1–43 (MSAFVLGSTGLVGLQILKVLDSSTAFKKVSTVSRRLPSVTSGK) constitute a mitochondrion transit peptide.

Belongs to the FMP52 family.

It localises to the mitochondrion outer membrane. This Scheffersomyces stipitis (strain ATCC 58785 / CBS 6054 / NBRC 10063 / NRRL Y-11545) (Yeast) protein is Protein FMP52-1, mitochondrial (FMP521).